A 125-amino-acid polypeptide reads, in one-letter code: Small ribosomal subunit protein uS12 (125 aa).

Asp-89 is subject to 3-methylthioaspartic acid. Positions 101–125 (SLDTAGVKDRKQSRSKYGAKRPKKA) are disordered. A compositionally biased stretch (basic residues) spans 113–125 (SRSKYGAKRPKKA).

Belongs to the universal ribosomal protein uS12 family. In terms of assembly, part of the 30S ribosomal subunit. Contacts proteins S8 and S17. May interact with IF1 in the 30S initiation complex.

With S4 and S5 plays an important role in translational accuracy. Its function is as follows. Interacts with and stabilizes bases of the 16S rRNA that are involved in tRNA selection in the A site and with the mRNA backbone. Located at the interface of the 30S and 50S subunits, it traverses the body of the 30S subunit contacting proteins on the other side and probably holding the rRNA structure together. The combined cluster of proteins S8, S12 and S17 appears to hold together the shoulder and platform of the 30S subunit. The protein is Small ribosomal subunit protein uS12 of Thiobacillus denitrificans (strain ATCC 25259 / T1).